We begin with the raw amino-acid sequence, 278 residues long: MSSKSQLTYTARAQSHPNPLARKLFQVAEEKKSNVTVSADVTTTKELLDLADPSTGLGPYIAVIKTHIDILSDFSQETIDGLNALAQKHNFLIFEDRKFIDIGNTVQKQYHNGTLRISEWAHIINCSILPGEGIVEALAQTAQATDFPYGSERGLLILAEMTSKGSLATGAYTSASVDIARKYPSFVLGFVSTRSLGEVESTEAPASEDFVVFTTGVNLSSKGDKLGQQYQTPQSAVGRGADFIISGRGIYAAADPVEAAKQYQQQGWEAYLARVGAQ.

Substrate is bound by residues Asp-40, 65–67, 96–105, Tyr-230, and Arg-248; these read KTH and DRKFIDIGNT. Lys-98 serves as the catalytic Proton donor.

The protein belongs to the OMP decarboxylase family.

The catalysed reaction is orotidine 5'-phosphate + H(+) = UMP + CO2. The protein operates within pyrimidine metabolism; UMP biosynthesis via de novo pathway; UMP from orotate: step 2/2. The sequence is that of Orotidine 5'-phosphate decarboxylase (pyrG) from Penicillium chrysogenum (Penicillium notatum).